Consider the following 830-residue polypeptide: Periplasmic nitrate reductase 2 (830 aa).

A signal peptide (tat-type signal) is located at residues 1–31; sequence MKVSRRKFIKAQAVASAAAAAGISIPISASN. Residues 41–97 form the 4Fe-4S Mo/W bis-MGD-type domain; sequence ITWEKAPCRFCGTGCSVNVGTKEGKVVATHGDIKSPVNRGLNCVKGYFLSKIMYGKD. [4Fe-4S] cluster contacts are provided by Cys-48, Cys-51, Cys-55, and Cys-83. Residues Lys-85, Gln-152, Asn-177, Cys-181, 245-249, 264-266, Met-374, Gln-378, Asn-484, 510-511, Lys-533, Asp-560, and 720-729 each bind Mo-bis(molybdopterin guanine dinucleotide); these read STFEH, QSD, SE, and TGRVIEHWHS. Trp-796 contributes to the substrate binding site. Asn-804 and Lys-821 together coordinate Mo-bis(molybdopterin guanine dinucleotide).

This sequence belongs to the prokaryotic molybdopterin-containing oxidoreductase family. NasA/NapA/NarB subfamily. As to quaternary structure, component of the periplasmic nitrate reductase NapAB complex composed of NapA and NapB. [4Fe-4S] cluster is required as a cofactor. The cofactor is Mo-bis(molybdopterin guanine dinucleotide). Post-translationally, predicted to be exported by the Tat system. The position of the signal peptide cleavage has not been experimentally proven.

It is found in the periplasm. The enzyme catalyses 2 Fe(II)-[cytochrome] + nitrate + 2 H(+) = 2 Fe(III)-[cytochrome] + nitrite + H2O. Its function is as follows. Catalytic subunit of the periplasmic nitrate reductase complex NapAB. Receives electrons from NapB and catalyzes the reduction of nitrate to nitrite. This is Periplasmic nitrate reductase 2 from Photobacterium profundum (strain SS9).